Consider the following 343-residue polypeptide: Heat-inducible transcription repressor HrcA (343 aa).

It belongs to the HrcA family.

Its function is as follows. Negative regulator of class I heat shock genes (grpE-dnaK-dnaJ and groELS operons). Prevents heat-shock induction of these operons. The sequence is that of Heat-inducible transcription repressor HrcA from Mycolicibacterium paratuberculosis (strain ATCC BAA-968 / K-10) (Mycobacterium paratuberculosis).